The sequence spans 448 residues: Chaperone SurA (448 aa).

The signal sequence occupies residues 1-27; that stretch reads MKKTLRFAAVASGLVASLITVAPSASA. PpiC domains are found at residues 185 to 288 and 301 to 399; these read QQDL…RLVE and IVQT…QVLG.

The protein resides in the periplasm. The catalysed reaction is [protein]-peptidylproline (omega=180) = [protein]-peptidylproline (omega=0). Functionally, chaperone involved in the correct folding and assembly of outer membrane proteins. Recognizes specific patterns of aromatic residues and the orientation of their side chains, which are found more frequently in integral outer membrane proteins. May act in both early periplasmic and late outer membrane-associated steps of protein maturation. In Burkholderia mallei (strain ATCC 23344), this protein is Chaperone SurA.